The sequence spans 242 residues: N-glycosylase/DNA lyase (242 aa).

Positions 25, 52, and 63 each coordinate 8-oxoguanine. Residues 119–183 (KSYYRDMNRL…VDARIERITR (65 aa)) form a helix-hairpin-helix region. Lysine 143 (schiff-base intermediate with DNA) is an active-site residue. 8-oxoguanine contacts are provided by phenylalanine 147 and proline 173. The active site involves aspartate 175. 8-oxoguanine contacts are provided by aspartate 209 and tryptophan 213.

This sequence belongs to the archaeal N-glycosylase/DNA lyase (AGOG) family.

It carries out the reaction 2'-deoxyribonucleotide-(2'-deoxyribose 5'-phosphate)-2'-deoxyribonucleotide-DNA = a 3'-end 2'-deoxyribonucleotide-(2,3-dehydro-2,3-deoxyribose 5'-phosphate)-DNA + a 5'-end 5'-phospho-2'-deoxyribonucleoside-DNA + H(+). In terms of biological role, DNA repair enzyme that is part of the base excision repair (BER) pathway; protects from oxidative damage by removing the major product of DNA oxidation, 8-oxoguanine (GO), from single- and double-stranded DNA substrates. The polypeptide is N-glycosylase/DNA lyase (Methanopyrus kandleri (strain AV19 / DSM 6324 / JCM 9639 / NBRC 100938)).